The following is a 167-amino-acid chain: MITLIIFSFLSFLLGIILSFTAYKFRSQEDPIVEIVNELLPQSQCAQCGYSGCYPYAKAIVENSEKINKCIPGGTDLISAISSVLSIEVPEKNLIITHKKQKNNTVLINESNCVGCSKCASFCPVDAIVGAPNFIHTVLQEFCTGCNICLLHCPTNCIEIKKETYEE.

The interval 1-22 (MITLIIFSFLSFLLGIILSFTA) is hydrophobic. Positions 28–87 (QEDPIVEIVNELLPQSQCAQCGYSGCYPYAKAIVENSEKINKCIPGGTDLISAISSVLSI) constitute a 4Fe-4S domain. 12 residues coordinate [4Fe-4S] cluster: Cys45, Cys48, Cys53, Cys70, Cys113, Cys116, Cys119, Cys123, Cys143, Cys146, Cys149, and Cys153. 2 consecutive 4Fe-4S ferredoxin-type domains span residues 104 to 133 (NTVL…GAPN) and 134 to 163 (FIHT…IKKE).

Belongs to the 4Fe4S bacterial-type ferredoxin family. RnfB subfamily. In terms of assembly, the complex is composed of six subunits: RnfA, RnfB, RnfC, RnfD, RnfE and RnfG. [4Fe-4S] cluster is required as a cofactor.

Its subcellular location is the cell inner membrane. Its function is as follows. Part of a membrane-bound complex that couples electron transfer with translocation of ions across the membrane. The chain is Ion-translocating oxidoreductase complex subunit B from Buchnera aphidicola subsp. Acyrthosiphon pisum (strain Tuc7).